The sequence spans 353 residues: Photosystem II D2 protein (353 aa).

Thr-2 is subject to N-acetylthreonine. Position 2 is a phosphothreonine (Thr-2). Residues 41–61 form a helical membrane-spanning segment; the sequence is CAYFALGGWFTGTTFVTSWYT. His-118 serves as a coordination point for chlorophyll a. A helical transmembrane segment spans residues 125 to 141; sequence GFMLRQFELARSVQLRP. Positions 130 and 143 each coordinate pheophytin a. A helical transmembrane segment spans residues 153 to 166; the sequence is VFVSVFLIYPLGQS. His-198 is a chlorophyll a binding site. Residues 208–228 form a helical membrane-spanning segment; the sequence is AALLCAIHGATVENTLFEDGD. Residues His-215 and Phe-262 each contribute to the a plastoquinone site. Fe cation is bound at residue His-215. Residue His-269 coordinates Fe cation. Residues 279-295 form a helical membrane-spanning segment; the sequence is GLWMSAIGVVGLALNLR.

The protein belongs to the reaction center PufL/M/PsbA/D family. PSII is composed of 1 copy each of membrane proteins PsbA, PsbB, PsbC, PsbD, PsbE, PsbF, PsbH, PsbI, PsbJ, PsbK, PsbL, PsbM, PsbT, PsbX, PsbY, PsbZ, Psb30/Ycf12, at least 3 peripheral proteins of the oxygen-evolving complex and a large number of cofactors. It forms dimeric complexes. It depends on The D1/D2 heterodimer binds P680, chlorophylls that are the primary electron donor of PSII, and subsequent electron acceptors. It shares a non-heme iron and each subunit binds pheophytin, quinone, additional chlorophylls, carotenoids and lipids. There is also a Cl(-1) ion associated with D1 and D2, which is required for oxygen evolution. The PSII complex binds additional chlorophylls, carotenoids and specific lipids. as a cofactor.

The protein localises to the plastid. It is found in the chloroplast thylakoid membrane. The enzyme catalyses 2 a plastoquinone + 4 hnu + 2 H2O = 2 a plastoquinol + O2. Photosystem II (PSII) is a light-driven water:plastoquinone oxidoreductase that uses light energy to abstract electrons from H(2)O, generating O(2) and a proton gradient subsequently used for ATP formation. It consists of a core antenna complex that captures photons, and an electron transfer chain that converts photonic excitation into a charge separation. The D1/D2 (PsbA/PsbD) reaction center heterodimer binds P680, the primary electron donor of PSII as well as several subsequent electron acceptors. D2 is needed for assembly of a stable PSII complex. The protein is Photosystem II D2 protein of Drimys granadensis.